A 206-amino-acid chain; its full sequence is MSTGSVSDPEEMELRGLQREYPVPASKRPPLRGVERSYASPSDNSSAEEEDPDGEEERCALGTAGSAEGCKRKRPRVAGGGGAGGSAGGGGKKPLPAKGSAAECKQSQRNAANARERARMRVLSKAFSRLKTSLPWVPPDTKLSKLDTLRLASSYIAHLRQLLQEDRYENGYVHPVNLTWPFVVSGRPDSDTKEVSAANRLCGTTA.

A disordered region spans residues 1–115 (MSTGSVSDPE…QSQRNAANAR (115 aa)). A compositionally biased stretch (acidic residues) spans 46 to 56 (SAEEEDPDGEE). Positions 71 to 76 (KRKRPR) match the Nuclear localization signal motif. Residues 78 to 92 (AGGGGAGGSAGGGGK) show a composition bias toward gly residues. Low complexity predominate over residues 93 to 102 (KPLPAKGSAA). The 53-residue stretch at 107 to 159 (SQRNAANARERARMRVLSKAFSRLKTSLPWVPPDTKLSKLDTLRLASSYIAHL) folds into the bHLH domain.

Efficient DNA binding requires dimerization with another bHLH protein. Binds DNA as a homodimer or a heterodimer. Forms a heterodimer with TCF3. As to expression, expressed in lymphoid tissues, B-cell lines and activated B-cells.

The protein localises to the nucleus. Functionally, transcription repressor capable of inhibiting the transactivation capability of TCF3/E47. May play a role in regulating antigen-dependent B-cell differentiation. The chain is Musculin (MSC) from Homo sapiens (Human).